The following is a 951-amino-acid chain: Serine/threonine-protein kinase 10 (951 aa).

A Protein kinase domain is found at 36 to 294 (WEIIGELGDG…AAQLLEHPFV (259 aa)). ATP is bound by residues 42–50 (LGDGAFGKV) and K65. Catalysis depends on D157, which acts as the Proton acceptor. Acidic residues predominate over residues 319–330 (EENGEVEEEEAS). The tract at residues 319 to 479 (EENGEVEEEE…DSGSNSASES (161 aa)) is disordered. Polar residues predominate over residues 331 to 343 (DTPSSNKSVSQSA). Positions 345–356 (GEKDKHTGKEHV) are enriched in basic and acidic residues. Polar residues predominate over residues 364 to 373 (PQNTDSQADI). Basic and acidic residues-rich tracts occupy residues 374–394 (HSQKRNHEGKNYPEHNRHDAV) and 410–427 (HEPKRNSAAESYRNEEHG). Residues 429-443 (AVSSNQRPKSSQSDR) are compositionally biased toward polar residues. Residues S483, S487, and S491 each carry the phosphoserine; by PLK1 modification. Positions 583–723 (EQEMNSKRKF…NKKQQLLRDR (141 aa)) form a coiled coil. Over residues 785–800 (QERARLPKNQKAEAKT) the composition is skewed to basic and acidic residues. Positions 785-804 (QERARLPKNQKAEAKTRMTM) are disordered. Residues 898-928 (RENLRPRKKALEDELEHKKEEQEMFFRMNEE) are a coiled coil. The interval 930–951 (AGHPFPSNKPAKFYSFSSPEAS) is disordered.

The protein belongs to the protein kinase superfamily. STE Ser/Thr protein kinase family. STE20 subfamily. Homodimer. Autophosphorylates. Phosphorylated by plk1/plx1, suggesting the existence of a feedback loop with plk1/plx1. activation of the protein.

Its subcellular location is the cell membrane. It catalyses the reaction L-seryl-[protein] + ATP = O-phospho-L-seryl-[protein] + ADP + H(+). The catalysed reaction is L-threonyl-[protein] + ATP = O-phospho-L-threonyl-[protein] + ADP + H(+). Functionally, may act as a polo kinase kinase by mediating phosphorylation of plk1/plx1 and subsequent activation of plk1/plx1 during oocyte maturation. The chain is Serine/threonine-protein kinase 10 (stk10) from Xenopus tropicalis (Western clawed frog).